The following is a 488-amino-acid chain: Annexin A7 (488 aa).

The span at 1-18 (MSYPGYPPTGYPPFPGYP) shows a compositional bias: pro residues. Disordered stretches follow at residues 1–49 (MSYP…YPQV) and 71–150 (GYPG…NTES). The segment at 1-143 (MSYPGYPPTG…QYPGGQPTYP (143 aa)) is repeat-rich region. Residues 5-20 (GYPPTGYPPFPGYPPA) are 3 X 5 AA tandem repeats of G-Y-P-P-X. Gly residues predominate over residues 89–102 (PGQGFGVPPGGAGF). Annexin repeat units lie at residues 185–256 (FDAM…ALFM), 257–328 (PPTY…SMCQ), 340–412 (QMAQ…TILQ), and 416–487 (NRPA…AIVG). N6-acetyllysine is present on Lys233.

This sequence belongs to the annexin family. Interacts with PDCD6.

Calcium/phospholipid-binding protein which promotes membrane fusion and is involved in exocytosis. The polypeptide is Annexin A7 (ANXA7) (Macaca fascicularis (Crab-eating macaque)).